The chain runs to 106 residues: Probable glutaredoxin (106 aa).

Residues 8–106 form the Glutaredoxin domain; that stretch reads IVQKITGADP…AKYLDVQFTQ (99 aa). Cysteine 28 and cysteine 31 form a disulfide bridge.

It belongs to the glutaredoxin family.

The protein resides in the virion. This Acanthamoeba polyphaga mimivirus (APMV) protein is Probable glutaredoxin.